A 484-amino-acid polypeptide reads, in one-letter code: Ubiquinone biosynthesis monooxygenase COQ6, mitochondrial (484 aa).

Residues Met1–Gln41 constitute a mitochondrion transit peptide.

This sequence belongs to the UbiH/COQ6 family. As to quaternary structure, component of a multi-subunit COQ enzyme complex, composed of at least coq3, coq4, coq5, coq6, coq7 and coq9. Interacts with coq8b and coq7. FAD is required as a cofactor.

Its subcellular location is the mitochondrion inner membrane. The protein localises to the golgi apparatus. It is found in the cell projection. The catalysed reaction is a 4-hydroxy-3-(all-trans-polyprenyl)benzoate + 2 reduced [2Fe-2S]-[ferredoxin] + O2 + 2 H(+) = a 3,4-dihydroxy-5-(all-trans-polyprenyl)benzoate + 2 oxidized [2Fe-2S]-[ferredoxin] + H2O. It carries out the reaction a 2-methoxy-6-(all-trans-polyprenyl)phenol + 2 reduced [2Fe-2S]-[ferredoxin] + O2 + 2 H(+) = a 2-methoxy-6-(all-trans-polyprenyl)benzene-1,4-diol + 2 oxidized [2Fe-2S]-[ferredoxin] + H2O. The protein operates within cofactor biosynthesis; ubiquinone biosynthesis. In terms of biological role, FAD-dependent monooxygenase required for two non-consecutive steps during ubiquinone biosynthesis. Required for the C5-ring hydroxylation during ubiquinone biosynthesis by catalyzing the hydroxylation of 4-hydroxy-3-(all-trans-polyprenyl)benzoic acid to 3,4-dihydroxy-5-(all-trans-polyprenyl)benzoic acid. Also acts downstream of coq4, for the C1-hydroxylation during ubiquinone biosynthesis by catalyzing the hydroxylation of 2-methoxy-6-(all-trans-polyprenyl)phenol to 2-methoxy-6-(all-trans-polyprenyl)benzene-1,4-diol. The electrons required for the hydroxylation reaction are funneled indirectly to coq6 from NADPH via a ferredoxin/ferredoxin reductase system. This chain is Ubiquinone biosynthesis monooxygenase COQ6, mitochondrial, found in Danio rerio (Zebrafish).